The primary structure comprises 382 residues: Lipid-A-disaccharide synthase (382 aa).

It belongs to the LpxB family.

The enzyme catalyses 2-N,3-O-bis[(3R)-3-hydroxytetradecanoyl]-alpha-D-glucosaminyl 1-phosphate + UDP-2-N,3-O-bis[(3R)-3-hydroxytetradecanoyl]-alpha-D-glucosamine = lipid A disaccharide (E. coli) + UDP + H(+). It catalyses the reaction a lipid X + a UDP-2-N,3-O-bis[(3R)-3-hydroxyacyl]-alpha-D-glucosamine = a lipid A disaccharide + UDP + H(+). It functions in the pathway glycolipid biosynthesis; lipid IV(A) biosynthesis; lipid IV(A) from (3R)-3-hydroxytetradecanoyl-[acyl-carrier-protein] and UDP-N-acetyl-alpha-D-glucosamine: step 5/6. Its function is as follows. Condensation of UDP-2,3-diacylglucosamine and 2,3-diacylglucosamine-1-phosphate to form lipid A disaccharide, a precursor of lipid A, a phosphorylated glycolipid that anchors the lipopolysaccharide to the outer membrane of the cell. The sequence is that of Lipid-A-disaccharide synthase from Escherichia coli (strain ATCC 8739 / DSM 1576 / NBRC 3972 / NCIMB 8545 / WDCM 00012 / Crooks).